A 665-amino-acid polypeptide reads, in one-letter code: Zinc finger CCCH domain-containing protein 45 (665 aa).

The tract at residues 1 to 55 (MDDGDLSFDFEGGLDQPPAGGGGGPAPHSSDPGGVGGGGGGGGPGDGGGHGRGRG) is disordered. Positions 33-50 (GGVGGGGGGGGPGDGGGH) are enriched in gly residues. 3 C3H1-type zinc fingers span residues 58–85 (SYRQ…HQFD), 86–113 (KARM…HSYD), and 114–139 (DVKE…HVKL). Positions 167 to 256 (HNNYNQQGER…QATRIATPLP (90 aa)) are disordered. The segment covering 169-200 (NYNQQGERPQHPQGSGLPNQNSIDNTTTTTAQ) has biased composition (polar residues). Low complexity predominate over residues 205–238 (QQAQTTNQQPPQQQQQQQQQQQQQQKPNTNDQVQ). The segment covering 239 to 250 (SVPNGSSNQATR) has biased composition (polar residues). Positions 260-395 (SRYFIVKSCN…FIGEQLASLL (136 aa)) constitute a YTH domain. Residues 432-459 (DIVLFDDNEEEEEEESEEEEEGNGQESQ) are a coiled coil. A compositionally biased stretch (acidic residues) spans 439 to 454 (NEEEEEEESEEEEEGN). Disordered regions lie at residues 439 to 469 (NEEE…GMMW) and 561 to 665 (GPLM…SRKR). Over residues 561–573 (GPLMGGLGMGGPG) the composition is skewed to gly residues. The span at 596-623 (TKREQRRPGGERGDRYETTSDQGSRGHD) shows a compositional bias: basic and acidic residues.

In Oryza sativa subsp. japonica (Rice), this protein is Zinc finger CCCH domain-containing protein 45.